The sequence spans 346 residues: Holliday junction branch migration complex subunit RuvB (346 aa).

The tract at residues 1–183 (MTEQRIIASS…FGIVQRLEFY (183 aa)) is large ATPase domain (RuvB-L). ATP is bound by residues Ile22, Arg23, Gly64, Lys67, Thr68, Thr69, 130 to 132 (EDF), Arg173, Tyr183, and Arg220. Thr68 contributes to the Mg(2+) binding site. Positions 184-254 (SPQELTRIVS…VAQAAMQMLK (71 aa)) are small ATPAse domain (RuvB-S). The segment at 257 to 346 (PEGFDELDRR…PGIGEPGDLF (90 aa)) is head domain (RuvB-H). Residues Arg293, Arg312, and Arg317 each coordinate DNA.

The protein belongs to the RuvB family. As to quaternary structure, homohexamer. Forms an RuvA(8)-RuvB(12)-Holliday junction (HJ) complex. HJ DNA is sandwiched between 2 RuvA tetramers; dsDNA enters through RuvA and exits via RuvB. An RuvB hexamer assembles on each DNA strand where it exits the tetramer. Each RuvB hexamer is contacted by two RuvA subunits (via domain III) on 2 adjacent RuvB subunits; this complex drives branch migration. In the full resolvosome a probable DNA-RuvA(4)-RuvB(12)-RuvC(2) complex forms which resolves the HJ.

Its subcellular location is the cytoplasm. The catalysed reaction is ATP + H2O = ADP + phosphate + H(+). The RuvA-RuvB-RuvC complex processes Holliday junction (HJ) DNA during genetic recombination and DNA repair, while the RuvA-RuvB complex plays an important role in the rescue of blocked DNA replication forks via replication fork reversal (RFR). RuvA specifically binds to HJ cruciform DNA, conferring on it an open structure. The RuvB hexamer acts as an ATP-dependent pump, pulling dsDNA into and through the RuvAB complex. RuvB forms 2 homohexamers on either side of HJ DNA bound by 1 or 2 RuvA tetramers; 4 subunits per hexamer contact DNA at a time. Coordinated motions by a converter formed by DNA-disengaged RuvB subunits stimulates ATP hydrolysis and nucleotide exchange. Immobilization of the converter enables RuvB to convert the ATP-contained energy into a lever motion, pulling 2 nucleotides of DNA out of the RuvA tetramer per ATP hydrolyzed, thus driving DNA branch migration. The RuvB motors rotate together with the DNA substrate, which together with the progressing nucleotide cycle form the mechanistic basis for DNA recombination by continuous HJ branch migration. Branch migration allows RuvC to scan DNA until it finds its consensus sequence, where it cleaves and resolves cruciform DNA. The protein is Holliday junction branch migration complex subunit RuvB of Xanthomonas euvesicatoria pv. vesicatoria (strain 85-10) (Xanthomonas campestris pv. vesicatoria).